Here is a 931-residue protein sequence, read N- to C-terminus: Chitin synthase III (931 aa).

Residues N37 and N94 are each glycosylated (N-linked (GlcNAc...) asparagine). Positions 93 to 154 (PNASQLPPAG…PGGVGQAGGL (62 aa)) are disordered. Over residues 102–122 (GSGGFGDNGFGQYGQPQGFGG) the composition is skewed to gly residues. A glycan (N-linked (GlcNAc...) asparagine) is linked at N558. The next 5 helical transmembrane spans lie at 585 to 605 (FFLHIQVIYNVLNVIFSWFSL), 644 to 664 (IINALLKYLYLAFVILQFILA), 677 to 697 (IASFMVFGLIQGYILVLSGYL), 731 to 751 (VILIALITIYGLYFVASFLYL), and 759 to 779 (SFPYYMLLMSTYINILMVYAF). N-linked (GlcNAc...) asparagine glycosylation is present at N802. Transmembrane regions (helical) follow at residues 858 to 878 (TGLVVSWLFSNILLVVIITSD) and 899 to 919 (FLLYATAALSIVRFIGFLWFL).

It belongs to the chitin synthase family. Class III subfamily. Highly expressed in conidia and during appressorium formation.

The protein localises to the cell membrane. It carries out the reaction [(1-&gt;4)-N-acetyl-beta-D-glucosaminyl](n) + UDP-N-acetyl-alpha-D-glucosamine = [(1-&gt;4)-N-acetyl-beta-D-glucosaminyl](n+1) + UDP + H(+). In terms of biological role, polymerizes chitin, a structural polymer of the cell wall and septum, by transferring the sugar moiety of UDP-GlcNAc to the non-reducing end of the growing chitin polymer. Contributes to the production of conidia and the ability of fungal conidia to germinate. Involved in the fungal cell wall integrity and the ability of conidia to withstand biophysical pressure. Required for appressorium formation and evasion of insect cellular and/or humoral defenses, promoting the fungal dimorphic transition to the production of hyphal bodies that occurs within hosts, and ultimately to virulence. This Metarhizium acridum (strain CQMa 102) protein is Chitin synthase III.